The primary structure comprises 98 residues: Small ribosomal subunit protein bS6 (98 aa).

Belongs to the bacterial ribosomal protein bS6 family.

Binds together with bS18 to 16S ribosomal RNA. This Lactobacillus helveticus (strain DPC 4571) protein is Small ribosomal subunit protein bS6.